We begin with the raw amino-acid sequence, 163 residues long: Lysosomal enzyme trafficking factor (163 aa).

2 helical membrane-spanning segments follow: residues 40-60 and 98-118; these read MGWI…YYVF and LPFW…FLFL.

This sequence belongs to the LYSET family. In terms of assembly, interacts with GNPTAB; this interaction is important for proper localization of GNPTAB in Golgi stacks. Interacts with MBTPS1.

The protein localises to the golgi apparatus membrane. Required for mannose-6-phosphate-dependent trafficking of lysosomal enzymes. LYSET bridges GlcNAc-1-phosphate transferase (GNPTAB), to the membrane-bound transcription factor site-1 protease (MBTPS1), thus allowing proteolytic activation of the GNPTAB. GNPTAB is involved in the regulation of M6P-dependent Golgi-to-lysosome trafficking of lysosomal enzymes. LYSET is thus an essential factor for maturation and delivery of lysosomal hydrolases. In terms of biological role, (Microbial infection) Essential for infection by muliple viruses, including SARS-CoV-2, that utilize activated cathepsins for entry after M6P-dependent lysosomal transport. The chain is Lysosomal enzyme trafficking factor from Homo sapiens (Human).